Here is a 149-residue protein sequence, read N- to C-terminus: Calmodulin-2 (149 aa).

Ala2 carries the N-acetylalanine modification. EF-hand domains lie at 8-43 (EQIA…LGQN), 44-79 (PTEA…KMKD), 81-116 (DSEE…LGEK), and 117-149 (LTDE…MTSK). Positions 21, 23, 25, 27, 32, 57, 59, 61, 63, 68, 94, 96, 98, and 105 each coordinate Ca(2+). Lys116 carries the N6,N6,N6-trimethyllysine modification. Residues Asp130, Asp132, Asp134, Gln136, and Glu141 each contribute to the Ca(2+) site.

It belongs to the calmodulin family.

Functionally, calmodulin mediates the control of a large number of enzymes, ion channels and other proteins by Ca(2+). Among the enzymes to be stimulated by the calmodulin-Ca(2+) complex are a number of protein kinases and phosphatases. This chain is Calmodulin-2 (CAM2), found in Branchiostoma lanceolatum (Common lancelet).